Here is a 409-residue protein sequence, read N- to C-terminus: Arginine deiminase (409 aa).

Cys-399 functions as the Amidino-cysteine intermediate in the catalytic mechanism.

It belongs to the arginine deiminase family.

The protein localises to the cytoplasm. The catalysed reaction is L-arginine + H2O = L-citrulline + NH4(+). It participates in amino-acid degradation; L-arginine degradation via ADI pathway; carbamoyl phosphate from L-arginine: step 1/2. The protein is Arginine deiminase of Streptococcus gordonii (strain Challis / ATCC 35105 / BCRC 15272 / CH1 / DL1 / V288).